Reading from the N-terminus, the 348-residue chain is Probable dual-specificity RNA methyltransferase RlmN (348 aa).

The Proton acceptor role is filled by Glu-89. Residues 95–328 (HKNRNTVCVS…VTLRISYGSR (234 aa)) enclose the Radical SAM core domain. Cys-102 and Cys-333 are disulfide-bonded. [4Fe-4S] cluster-binding residues include Cys-109, Cys-113, and Cys-116. S-adenosyl-L-methionine-binding positions include 159-160 (GE), Ser-191, 214-216 (SLH), and Asn-290. Cys-333 (S-methylcysteine intermediate) is an active-site residue.

The protein belongs to the radical SAM superfamily. RlmN family. It depends on [4Fe-4S] cluster as a cofactor.

It localises to the cytoplasm. The catalysed reaction is adenosine(2503) in 23S rRNA + 2 reduced [2Fe-2S]-[ferredoxin] + 2 S-adenosyl-L-methionine = 2-methyladenosine(2503) in 23S rRNA + 5'-deoxyadenosine + L-methionine + 2 oxidized [2Fe-2S]-[ferredoxin] + S-adenosyl-L-homocysteine. The enzyme catalyses adenosine(37) in tRNA + 2 reduced [2Fe-2S]-[ferredoxin] + 2 S-adenosyl-L-methionine = 2-methyladenosine(37) in tRNA + 5'-deoxyadenosine + L-methionine + 2 oxidized [2Fe-2S]-[ferredoxin] + S-adenosyl-L-homocysteine. Its function is as follows. Specifically methylates position 2 of adenine 2503 in 23S rRNA and position 2 of adenine 37 in tRNAs. The polypeptide is Probable dual-specificity RNA methyltransferase RlmN (Dictyoglomus thermophilum (strain ATCC 35947 / DSM 3960 / H-6-12)).